The primary structure comprises 168 residues: Crossover junction endodeoxyribonuclease RuvC (168 aa).

Residues D9, E70, and D145 contribute to the active site. 3 residues coordinate Mg(2+): D9, E70, and D145.

This sequence belongs to the RuvC family. As to quaternary structure, homodimer which binds Holliday junction (HJ) DNA. The HJ becomes 2-fold symmetrical on binding to RuvC with unstacked arms; it has a different conformation from HJ DNA in complex with RuvA. In the full resolvosome a probable DNA-RuvA(4)-RuvB(12)-RuvC(2) complex forms which resolves the HJ. The cofactor is Mg(2+).

It localises to the cytoplasm. It carries out the reaction Endonucleolytic cleavage at a junction such as a reciprocal single-stranded crossover between two homologous DNA duplexes (Holliday junction).. The RuvA-RuvB-RuvC complex processes Holliday junction (HJ) DNA during genetic recombination and DNA repair. Endonuclease that resolves HJ intermediates. Cleaves cruciform DNA by making single-stranded nicks across the HJ at symmetrical positions within the homologous arms, yielding a 5'-phosphate and a 3'-hydroxyl group; requires a central core of homology in the junction. The consensus cleavage sequence is 5'-(A/T)TT(C/G)-3'. Cleavage occurs on the 3'-side of the TT dinucleotide at the point of strand exchange. HJ branch migration catalyzed by RuvA-RuvB allows RuvC to scan DNA until it finds its consensus sequence, where it cleaves and resolves the cruciform DNA. In Chlamydia pneumoniae (Chlamydophila pneumoniae), this protein is Crossover junction endodeoxyribonuclease RuvC.